A 267-amino-acid chain; its full sequence is Non-homologous end joining protein Ku (267 aa).

One can recognise a Ku domain in the interval 10-190; that stretch reads ISFGLVSFPV…TKYTAKELEL (181 aa).

This sequence belongs to the prokaryotic Ku family. As to quaternary structure, homodimer. Interacts with LigD.

In terms of biological role, with LigD forms a non-homologous end joining (NHEJ) DNA repair enzyme, which repairs dsDNA breaks with reduced fidelity. Binds linear dsDNA with 5'- and 3'- overhangs but not closed circular dsDNA nor ssDNA. Recruits and stimulates the ligase activity of LigD. In Solibacter usitatus (strain Ellin6076), this protein is Non-homologous end joining protein Ku.